Consider the following 381-residue polypeptide: Protein YkfC (381 aa).

The region spanning 72–337 is the Reverse transcriptase domain; that stretch reads LRDELLSGHY…DGFIFLGHRL (266 aa). Mg(2+)-binding residues include D166, D284, and D285.

It belongs to the bacterial reverse transcriptase family.

This is Protein YkfC (ykfC) from Escherichia coli (strain K12).